The chain runs to 459 residues: UDP-glycosyltransferase 78D3 (459 aa).

UDP-alpha-D-glucose contacts are provided by residues 338-340 (APQ), 355-363 (HGGWNSVLE), and 377-380 (FGDH).

The protein belongs to the UDP-glycosyltransferase family.

Its function is as follows. Possesses low quercetin 3-O-glucosyltransferase activity in vitro. In Arabidopsis thaliana (Mouse-ear cress), this protein is UDP-glycosyltransferase 78D3 (UGT78D3).